We begin with the raw amino-acid sequence, 161 residues long: Nucleotide-binding protein BceJ2315_27070 (161 aa).

It belongs to the YajQ family.

Nucleotide-binding protein. The chain is Nucleotide-binding protein BceJ2315_27070 from Burkholderia cenocepacia (strain ATCC BAA-245 / DSM 16553 / LMG 16656 / NCTC 13227 / J2315 / CF5610) (Burkholderia cepacia (strain J2315)).